The primary structure comprises 61 residues: Photosystem II reaction center protein K (61 aa).

A propeptide spanning residues 1–24 (MLNIFSLICICLNSALHSSSFFFA) is cleaved from the precursor. The helical transmembrane segment at 32-52 (FFNPIVDFMPVIPVLFFLLAL) threads the bilayer.

It belongs to the PsbK family. PSII is composed of 1 copy each of membrane proteins PsbA, PsbB, PsbC, PsbD, PsbE, PsbF, PsbH, PsbI, PsbJ, PsbK, PsbL, PsbM, PsbT, PsbX, PsbY, PsbZ, Psb30/Ycf12, at least 3 peripheral proteins of the oxygen-evolving complex and a large number of cofactors. It forms dimeric complexes.

It localises to the plastid. It is found in the chloroplast thylakoid membrane. One of the components of the core complex of photosystem II (PSII). PSII is a light-driven water:plastoquinone oxidoreductase that uses light energy to abstract electrons from H(2)O, generating O(2) and a proton gradient subsequently used for ATP formation. It consists of a core antenna complex that captures photons, and an electron transfer chain that converts photonic excitation into a charge separation. The chain is Photosystem II reaction center protein K from Drimys granadensis.